Here is a 542-residue protein sequence, read N- to C-terminus: MGAYLSQPNTVKCSGDGVGAPRLPLPYGFSAMQGWRVSMEDAHNCIPELDNETAMFSVYDGHGGEEVALYCAKYLPDIIKDQKAYKEGKLQKALQDAFLAIDAKLTTEEVIKELAQIAGRPTEDEDDKDKVADEDDVDNEEAALLHEEATMTIEELLTRYGQNCQKVPPHTKSGIGTGDEPGPQGLNGEAGPEDPSRETPSQENGPTAKGHTGFSSNSEHGTEAGQISEPGTATGEAGPSCSSASDKLPRVAKSKFFEDSEDESDEVEEEEDDSEECSEDEDGYSSEEAENEEDEDDTEEAEEDDDEEMMVPGMEGKEEPGSDSGTTAVVALIRGKQLIVANAGDSRCVVSEAGKALDMSYDHKPEDEVELARIKNAGGKVTMDGRVNGGLNLSRAIGDHFYKRNKNLPPQEQMISALPDIKVLTLTDDHEFMVIACDGIWNVMSSQEVVDFIQSKISQRDENGELRLLSSIVEELLDQCLAPDTSGDGTGCDNMTCIIICFKPRNTVELQAESGKRKLEEALSTEGAEDTGNSDKKKAKRD.

Gly2 is lipidated: N-myristoyl glycine. Arg22 bears the Omega-N-methylarginine mark. The 477-residue stretch at 26 to 502 folds into the PPM-type phosphatase domain; it reads PYGFSAMQGW…DNMTCIIICF (477 aa). Residues Asp60 and Gly61 each contribute to the Mn(2+) site. Disordered stretches follow at residues 117 to 136 and 164 to 325; these read IAGR…DEDD and CQKV…SDSG. Thr122 carries the phosphothreonine modification. Acidic residues-rich tracts occupy residues 123-136 and 259-309; these read EDED…DEDD and DSED…DEEM. Lys380 is modified (N6-acetyllysine). Residues Asp438 and Asp493 each contribute to the Mn(2+) site. The interval 513–542 is disordered; it reads ESGKRKLEEALSTEGAEDTGNSDKKKAKRD. Position 524 is a phosphoserine (Ser524).

Belongs to the PP2C family. In terms of assembly, interacts with NOL3; may dephosphorylate NOL3. Mg(2+) is required as a cofactor. The cofactor is Mn(2+). In terms of tissue distribution, highly expressed in testis. Low level of expression in kidney. Also expressed in a number of tissues undergoing proliferation including embryo, uterus at pregnancy, placenta, and ovaries.

Its subcellular location is the nucleus. The protein localises to the membrane. It catalyses the reaction O-phospho-L-seryl-[protein] + H2O = L-seryl-[protein] + phosphate. The enzyme catalyses O-phospho-L-threonyl-[protein] + H2O = L-threonyl-[protein] + phosphate. Its function is as follows. May be involved in regulation of cell cycle. In Mus musculus (Mouse), this protein is Protein phosphatase 1G (Ppm1g).